Consider the following 555-residue polypeptide: Glutamine--tRNA ligase (555 aa).

A 'HIGH' region motif is present at residues Pro34–His44. Residues Glu35–Asn37 and His41–Ser47 each bind ATP. Residues Asp67 and Tyr212 each coordinate L-glutamine. ATP contacts are provided by residues Thr231, Arg261–Leu262, and Met269–Lys271. Positions Val268–Arg272 match the 'KMSKS' region motif. The interval Thr317–Glu324 is interaction with tRNA.

This sequence belongs to the class-I aminoacyl-tRNA synthetase family. Monomer.

The protein localises to the cytoplasm. It catalyses the reaction tRNA(Gln) + L-glutamine + ATP = L-glutaminyl-tRNA(Gln) + AMP + diphosphate. This is Glutamine--tRNA ligase from Salmonella agona (strain SL483).